The sequence spans 183 residues: Peptide deformylase (183 aa).

Residues Cys-110 and His-153 each contribute to the Fe cation site. The active site involves Glu-154. His-157 contacts Fe cation.

The protein belongs to the polypeptide deformylase family. The cofactor is Fe(2+).

It catalyses the reaction N-terminal N-formyl-L-methionyl-[peptide] + H2O = N-terminal L-methionyl-[peptide] + formate. Functionally, removes the formyl group from the N-terminal Met of newly synthesized proteins. Requires at least a dipeptide for an efficient rate of reaction. N-terminal L-methionine is a prerequisite for activity but the enzyme has broad specificity at other positions. This Oceanobacillus iheyensis (strain DSM 14371 / CIP 107618 / JCM 11309 / KCTC 3954 / HTE831) protein is Peptide deformylase.